The sequence spans 228 residues: Dehydrin Rab25 (228 aa).

Disordered stretches follow at residues 1 to 68 (MAEH…EAPH) and 115 to 228 (AGVT…HGHH). Basic and acidic residues-rich tracts occupy residues 169–187 (KEKIKEKLPGSHKQEEQKQ) and 212–228 (KGIVEKIKEKLPGHGHH).

This sequence belongs to the plant dehydrin family.

The protein is Dehydrin Rab25 (RAB25) of Oryza sativa subsp. japonica (Rice).